The sequence spans 433 residues: Serine hydroxymethyltransferase (433 aa).

(6S)-5,6,7,8-tetrahydrofolate is bound by residues L133 and 137 to 139 (GHL). Residue K242 is modified to N6-(pyridoxal phosphate)lysine. 366–368 (SPF) is a binding site for (6S)-5,6,7,8-tetrahydrofolate.

It belongs to the SHMT family. In terms of assembly, homodimer. It depends on pyridoxal 5'-phosphate as a cofactor.

Its subcellular location is the cytoplasm. The catalysed reaction is (6R)-5,10-methylene-5,6,7,8-tetrahydrofolate + glycine + H2O = (6S)-5,6,7,8-tetrahydrofolate + L-serine. Its pathway is one-carbon metabolism; tetrahydrofolate interconversion. The protein operates within amino-acid biosynthesis; glycine biosynthesis; glycine from L-serine: step 1/1. In terms of biological role, catalyzes the reversible interconversion of serine and glycine with tetrahydrofolate (THF) serving as the one-carbon carrier. This reaction serves as the major source of one-carbon groups required for the biosynthesis of purines, thymidylate, methionine, and other important biomolecules. Also exhibits THF-independent aldolase activity toward beta-hydroxyamino acids, producing glycine and aldehydes, via a retro-aldol mechanism. In Beijerinckia indica subsp. indica (strain ATCC 9039 / DSM 1715 / NCIMB 8712), this protein is Serine hydroxymethyltransferase.